Reading from the N-terminus, the 152-residue chain is Probable histone H2A.3 (152 aa).

Disordered stretches follow at residues 1–25 (MDAS…KKSV) and 129–152 (KTER…PKKA). A compositionally biased stretch (basic residues) spans 7-25 (TTKKGAGGRKGGGPRKKSV). A compositionally biased stretch (basic and acidic residues) spans 129–142 (KTERANTGGKEPKT). An SPKK motif motif is present at residues 148-151 (SPKK).

The protein belongs to the histone H2A family. The nucleosome is a histone octamer containing two molecules each of H2A, H2B, H3 and H4 assembled in one H3-H4 heterotetramer and two H2A-H2B heterodimers. The octamer wraps approximately 147 bp of DNA.

It localises to the nucleus. Its subcellular location is the chromosome. In terms of biological role, core component of nucleosome. Nucleosomes wrap and compact DNA into chromatin, limiting DNA accessibility to the cellular machineries which require DNA as a template. Histones thereby play a central role in transcription regulation, DNA repair, DNA replication and chromosomal stability. DNA accessibility is regulated via a complex set of post-translational modifications of histones, also called histone code, and nucleosome remodeling. The sequence is that of Probable histone H2A.3 from Medicago truncatula (Barrel medic).